The chain runs to 315 residues: Coproporphyrin III ferrochelatase (315 aa).

Fe-coproporphyrin III is bound by residues Tyr-13, Arg-30, Arg-46–Tyr-47, Ser-54, and Tyr-125. Fe(2+) contacts are provided by His-183 and Glu-264.

It belongs to the ferrochelatase family.

It is found in the cytoplasm. The catalysed reaction is Fe-coproporphyrin III + 2 H(+) = coproporphyrin III + Fe(2+). The protein operates within porphyrin-containing compound metabolism; protoheme biosynthesis. Involved in coproporphyrin-dependent heme b biosynthesis. Catalyzes the insertion of ferrous iron into coproporphyrin III to form Fe-coproporphyrin III. The protein is Coproporphyrin III ferrochelatase of Anoxybacillus flavithermus (strain DSM 21510 / WK1).